Reading from the N-terminus, the 101-residue chain is NAD(P)H-quinone oxidoreductase subunit 4L, chloroplastic (101 aa).

Transmembrane regions (helical) follow at residues 2–22, 32–52, and 61–81; these read MLEH…YGLI, MCLE…SDLF, and IFSI…PAIV.

This sequence belongs to the complex I subunit 4L family. As to quaternary structure, NDH is composed of at least 16 different subunits, 5 of which are encoded in the nucleus.

It localises to the plastid. The protein resides in the chloroplast thylakoid membrane. The catalysed reaction is a plastoquinone + NADH + (n+1) H(+)(in) = a plastoquinol + NAD(+) + n H(+)(out). It carries out the reaction a plastoquinone + NADPH + (n+1) H(+)(in) = a plastoquinol + NADP(+) + n H(+)(out). Functionally, NDH shuttles electrons from NAD(P)H:plastoquinone, via FMN and iron-sulfur (Fe-S) centers, to quinones in the photosynthetic chain and possibly in a chloroplast respiratory chain. The immediate electron acceptor for the enzyme in this species is believed to be plastoquinone. Couples the redox reaction to proton translocation, and thus conserves the redox energy in a proton gradient. The chain is NAD(P)H-quinone oxidoreductase subunit 4L, chloroplastic from Nymphaea alba (White water-lily).